Reading from the N-terminus, the 64-residue chain is Large ribosomal subunit protein bL35 (64 aa).

Residues 1-26 (MPKIKTHRGAAKRFKKTGTGKIKRSK) are compositionally biased toward basic residues. Residues 1-48 (MPKIKTHRGAAKRFKKTGTGKIKRSKAYASHLLGGKSPKRKRNLRKAG) form a disordered region.

Belongs to the bacterial ribosomal protein bL35 family.

The protein is Large ribosomal subunit protein bL35 of Syntrophomonas wolfei subsp. wolfei (strain DSM 2245B / Goettingen).